The chain runs to 1088 residues: DNA polymerase II large subunit (1088 aa).

Belongs to the archaeal DNA polymerase II family. As to quaternary structure, heterodimer of a large subunit and a small subunit.

It carries out the reaction DNA(n) + a 2'-deoxyribonucleoside 5'-triphosphate = DNA(n+1) + diphosphate. It catalyses the reaction Exonucleolytic cleavage in the 3'- to 5'-direction to yield nucleoside 5'-phosphates.. Functionally, possesses two activities: a DNA synthesis (polymerase) and an exonucleolytic activity that degrades single-stranded DNA in the 3'- to 5'-direction. Has a template-primer preference which is characteristic of a replicative DNA polymerase. This is DNA polymerase II large subunit (polC) from Thermoplasma volcanium (strain ATCC 51530 / DSM 4299 / JCM 9571 / NBRC 15438 / GSS1).